Here is a 119-residue protein sequence, read N- to C-terminus: Large ribosomal subunit protein bL20 (119 aa).

This sequence belongs to the bacterial ribosomal protein bL20 family.

In terms of biological role, binds directly to 23S ribosomal RNA and is necessary for the in vitro assembly process of the 50S ribosomal subunit. It is not involved in the protein synthesizing functions of that subunit. This Streptococcus equi subsp. equi (strain 4047) protein is Large ribosomal subunit protein bL20.